The following is a 692-amino-acid chain: Elongation factor G (692 aa).

The tr-type G domain maps to 8 to 282; that stretch reads ENTRNIGIMA…GVVDYLPSPL (275 aa). Residues 17–24, 81–85, and 135–138 contribute to the GTP site; these read AHIDAGKT, DTPGH, and NKMD.

Belongs to the TRAFAC class translation factor GTPase superfamily. Classic translation factor GTPase family. EF-G/EF-2 subfamily.

It is found in the cytoplasm. In terms of biological role, catalyzes the GTP-dependent ribosomal translocation step during translation elongation. During this step, the ribosome changes from the pre-translocational (PRE) to the post-translocational (POST) state as the newly formed A-site-bound peptidyl-tRNA and P-site-bound deacylated tRNA move to the P and E sites, respectively. Catalyzes the coordinated movement of the two tRNA molecules, the mRNA and conformational changes in the ribosome. The chain is Elongation factor G from Geobacillus thermodenitrificans (strain NG80-2).